The following is a 119-amino-acid chain: uncharacterized protein (119 aa).

The region spanning 1-112 (MVFNMRSTRG…FISSCLLLVL (112 aa)) is the ABC transmembrane type-1 domain. The next 2 membrane-spanning stretches (helical) occupy residues 51–73 (VLAW…ATRF) and 91–111 (FEIA…LLLV).

The protein belongs to the binding-protein-dependent transport system permease family. CysTW subfamily.

Its subcellular location is the cell membrane. This is an uncharacterized protein from Haemophilus influenzae (strain ATCC 51907 / DSM 11121 / KW20 / Rd).